The sequence spans 381 residues: N-acetyldiaminopimelate deacetylase (381 aa).

The active site involves Asp-73. Glu-132 (proton acceptor) is an active-site residue.

The protein belongs to the peptidase M20A family. N-acetyldiaminopimelate deacetylase subfamily.

It catalyses the reaction N-acetyl-(2S,6S)-2,6-diaminopimelate + H2O = (2S,6S)-2,6-diaminopimelate + acetate. It participates in amino-acid biosynthesis; L-lysine biosynthesis via DAP pathway; LL-2,6-diaminopimelate from (S)-tetrahydrodipicolinate (acetylase route): step 3/3. Functionally, catalyzes the conversion of N-acetyl-diaminopimelate to diaminopimelate and acetate. In Limosilactobacillus reuteri (strain DSM 20016) (Lactobacillus reuteri), this protein is N-acetyldiaminopimelate deacetylase.